Consider the following 274-residue polypeptide: Siroheme biosynthesis protein MET8 (274 aa).

NAD(+)-binding positions include 23-24, 43-45, and phenylalanine 93; these read EV and SPD. The active-site Proton acceptor is aspartate 141.

It belongs to the precorrin-2 dehydrogenase / sirohydrochlorin ferrochelatase family. MET8 subfamily. As to quaternary structure, homodimer.

The enzyme catalyses precorrin-2 + NAD(+) = sirohydrochlorin + NADH + 2 H(+). It carries out the reaction siroheme + 2 H(+) = sirohydrochlorin + Fe(2+). Its pathway is porphyrin-containing compound metabolism; siroheme biosynthesis; siroheme from sirohydrochlorin: step 1/1. It functions in the pathway porphyrin-containing compound metabolism; siroheme biosynthesis; sirohydrochlorin from precorrin-2: step 1/1. Functionally, catalyzes the conversion of precorrin-2 into siroheme. This reaction consist of the NAD-dependent oxidation of precorrin-2 into sirohydrochlorin and its subsequent ferrochelation into siroheme. This chain is Siroheme biosynthesis protein MET8, found in Saccharomyces cerevisiae (strain ATCC 204508 / S288c) (Baker's yeast).